The following is a 183-amino-acid chain: dTDP-4-dehydrorhamnose 3,5-epimerase (183 aa).

Substrate contacts are provided by residues Arg24, Glu29, 48–50 (QDN), and Arg60. His63 serves as the catalytic Proton acceptor. Lys73 and His120 together coordinate substrate. The Proton donor role is filled by Tyr133. Substrate is bound by residues Glu144 and Lys169.

This sequence belongs to the dTDP-4-dehydrorhamnose 3,5-epimerase family. In terms of assembly, homodimer.

The catalysed reaction is dTDP-4-dehydro-6-deoxy-alpha-D-glucose = dTDP-4-dehydro-beta-L-rhamnose. It functions in the pathway carbohydrate biosynthesis; dTDP-L-rhamnose biosynthesis. It participates in bacterial outer membrane biogenesis; LPS O-antigen biosynthesis. Functionally, catalyzes the epimerization of the C3' and C5'positions of dTDP-6-deoxy-D-xylo-4-hexulose, forming dTDP-6-deoxy-L-lyxo-4-hexulose. In Salmonella typhimurium (strain LT2 / SGSC1412 / ATCC 700720), this protein is dTDP-4-dehydrorhamnose 3,5-epimerase.